We begin with the raw amino-acid sequence, 145 residues long: 3-hydroxyacyl-[acyl-carrier-protein] dehydratase FabZ (145 aa).

Residue histidine 47 is part of the active site.

Belongs to the thioester dehydratase family. FabZ subfamily.

Its subcellular location is the cytoplasm. It catalyses the reaction a (3R)-hydroxyacyl-[ACP] = a (2E)-enoyl-[ACP] + H2O. In terms of biological role, involved in unsaturated fatty acids biosynthesis. Catalyzes the dehydration of short chain beta-hydroxyacyl-ACPs and long chain saturated and unsaturated beta-hydroxyacyl-ACPs. This chain is 3-hydroxyacyl-[acyl-carrier-protein] dehydratase FabZ, found in Polaromonas sp. (strain JS666 / ATCC BAA-500).